Reading from the N-terminus, the 289-residue chain is 3-methyl-2-oxobutanoate hydroxymethyltransferase (289 aa).

Positions 50 and 89 each coordinate Mg(2+). 3-methyl-2-oxobutanoate is bound by residues 50–51, D89, and K119; that span reads DS. E121 serves as a coordination point for Mg(2+). The active-site Proton acceptor is the E188. The interval 266–289 is disordered; that stretch reads AQHSFGMPEDEQRRWEENVSGADD.

It belongs to the PanB family. As to quaternary structure, homodecamer; pentamer of dimers. Mg(2+) is required as a cofactor.

It localises to the cytoplasm. The catalysed reaction is 3-methyl-2-oxobutanoate + (6R)-5,10-methylene-5,6,7,8-tetrahydrofolate + H2O = 2-dehydropantoate + (6S)-5,6,7,8-tetrahydrofolate. The protein operates within cofactor biosynthesis; (R)-pantothenate biosynthesis; (R)-pantoate from 3-methyl-2-oxobutanoate: step 1/2. In terms of biological role, catalyzes the reversible reaction in which hydroxymethyl group from 5,10-methylenetetrahydrofolate is transferred onto alpha-ketoisovalerate to form ketopantoate. This is 3-methyl-2-oxobutanoate hydroxymethyltransferase from Oleidesulfovibrio alaskensis (strain ATCC BAA-1058 / DSM 17464 / G20) (Desulfovibrio alaskensis).